The chain runs to 181 residues: Lipoprotein signal peptidase (181 aa).

A run of 3 helical transmembrane segments spans residues 25–45 (LFYK…QVFI), 86–106 (LVYF…VFMV), and 107–127 (KYSY…NFFD). Active-site residues include Asp138 and Asp153. The helical transmembrane segment at 149–169 (FNFADCCITFGFIGLFFCFLI) threads the bilayer.

It belongs to the peptidase A8 family.

It localises to the cell membrane. It carries out the reaction Release of signal peptides from bacterial membrane prolipoproteins. Hydrolyzes -Xaa-Yaa-Zaa-|-(S,diacylglyceryl)Cys-, in which Xaa is hydrophobic (preferably Leu), and Yaa (Ala or Ser) and Zaa (Gly or Ala) have small, neutral side chains.. The protein operates within protein modification; lipoprotein biosynthesis (signal peptide cleavage). This protein specifically catalyzes the removal of signal peptides from prolipoproteins. This chain is Lipoprotein signal peptidase, found in Mycoplasma genitalium (strain ATCC 33530 / DSM 19775 / NCTC 10195 / G37) (Mycoplasmoides genitalium).